We begin with the raw amino-acid sequence, 51 residues long: Sperm protamine P1 (51 aa).

This sequence belongs to the protamine P1 family. As to expression, testis.

The protein resides in the nucleus. It localises to the chromosome. Functionally, protamines substitute for histones in the chromatin of sperm during the haploid phase of spermatogenesis. They compact sperm DNA into a highly condensed, stable and inactive complex. This chain is Sperm protamine P1 (PRM1), found in Trachypithecus cristatus (Silvered leaf-monkey).